We begin with the raw amino-acid sequence, 184 residues long: Probable RNA 2'-phosphotransferase (184 aa).

Belongs to the KptA/TPT1 family.

Removes the 2'-phosphate from RNA via an intermediate in which the phosphate is ADP-ribosylated by NAD followed by a presumed transesterification to release the RNA and generate ADP-ribose 1''-2''-cyclic phosphate (APPR&gt;P). May function as an ADP-ribosylase. This is Probable RNA 2'-phosphotransferase from Rhizobium johnstonii (strain DSM 114642 / LMG 32736 / 3841) (Rhizobium leguminosarum bv. viciae).